The primary structure comprises 741 residues: Pentatricopeptide repeat-containing protein At1g08070, chloroplastic (741 aa).

PPR repeat units lie at residues 98 to 132, 133 to 167, 168 to 202, 203 to 229, 230 to 264, 265 to 299, 300 to 330, 331 to 365, 366 to 396, 403 to 433, 434 to 468, 469 to 499, and 505 to 535; these read NLLI…GLLP, NSYT…GCDL, DLYV…DVVS, YTAL…IPVK, DVVS…NVRP, DEST…GFGS, NLKI…LPYK, DVIS…GETP, NDVT…IDKR, ASSL…ILHK, SLSS…GIQP, DDIT…MTQD, and KLEH…MEME. A type E motif region spans residues 540–615; it reads IWCSLLKACK…VPGCSSIEID (76 aa). Residues 616–646 form a type E(+) motif region; the sequence is SVVHEFIIGDKFHPRNREIYGMLEEMEVLLE. The segment at 647-741 is type DYW motif; that stretch reads KAGFVPDTSE…DGVCSCNDYW (95 aa).

This sequence belongs to the PPR family. PCMP-H subfamily. As to quaternary structure, interacts with ORRM1. Interacts with VAR3/OZ1.

The protein resides in the plastid. The protein localises to the chloroplast. Functionally, involved in multiple sites RNA editing events in chloroplasts. Involved in the editing of the site 9 of ndhB (ndhB-9) and site 1 of ndhG (ndhG-1) transcripts, which are two plastid-encoded subunits of the chloroplast NAD(P)H dehydrogenase (NDH) complex. Not essential for the activity of the NDH complex of the photosynthetic electron transport chain. In Arabidopsis thaliana (Mouse-ear cress), this protein is Pentatricopeptide repeat-containing protein At1g08070, chloroplastic (PCMP-H12).